A 481-amino-acid chain; its full sequence is Protein nucleotidyltransferase YdiU (481 aa).

Positions 85, 87, 88, 108, 120, 121, 172, and 179 each coordinate ATP. Catalysis depends on D248, which acts as the Proton acceptor. Mg(2+) is bound by residues N249 and D258. ATP is bound at residue D258.

It belongs to the SELO family. Requires Mg(2+) as cofactor. Mn(2+) serves as cofactor.

The enzyme catalyses L-seryl-[protein] + ATP = 3-O-(5'-adenylyl)-L-seryl-[protein] + diphosphate. It carries out the reaction L-threonyl-[protein] + ATP = 3-O-(5'-adenylyl)-L-threonyl-[protein] + diphosphate. It catalyses the reaction L-tyrosyl-[protein] + ATP = O-(5'-adenylyl)-L-tyrosyl-[protein] + diphosphate. The catalysed reaction is L-histidyl-[protein] + UTP = N(tele)-(5'-uridylyl)-L-histidyl-[protein] + diphosphate. The enzyme catalyses L-seryl-[protein] + UTP = O-(5'-uridylyl)-L-seryl-[protein] + diphosphate. It carries out the reaction L-tyrosyl-[protein] + UTP = O-(5'-uridylyl)-L-tyrosyl-[protein] + diphosphate. Nucleotidyltransferase involved in the post-translational modification of proteins. It can catalyze the addition of adenosine monophosphate (AMP) or uridine monophosphate (UMP) to a protein, resulting in modifications known as AMPylation and UMPylation. The protein is Protein nucleotidyltransferase YdiU of Cereibacter sphaeroides (strain ATCC 17023 / DSM 158 / JCM 6121 / CCUG 31486 / LMG 2827 / NBRC 12203 / NCIMB 8253 / ATH 2.4.1.) (Rhodobacter sphaeroides).